The following is a 761-amino-acid chain: DNA topoisomerase 1 (761 aa).

Residues 6–143 (TALIICEKPS…KRMRFSSLTK (138 aa)) enclose the Toprim domain. Residues glutamate 12 and aspartate 111 each contribute to the Mg(2+) site. Positions 157-569 (DYGLVDAGES…EAEKRLRKIL (413 aa)) constitute a Topo IA-type catalytic domain. The interaction with DNA stretch occupies residues 196–201 (SVGRVQ). Tyrosine 315 functions as the O-(5'-phospho-DNA)-tyrosine intermediate in the catalytic mechanism. 3 C4-type zinc fingers span residues 600–626 (CPKC…YPEC), 680–706 (CPKC…YPKC), and 721–747 (CPKC…YPKC).

Belongs to the type IA topoisomerase family. In terms of assembly, monomer. Mg(2+) serves as cofactor.

It catalyses the reaction ATP-independent breakage of single-stranded DNA, followed by passage and rejoining.. Releases the supercoiling and torsional tension of DNA, which is introduced during the DNA replication and transcription, by transiently cleaving and rejoining one strand of the DNA duplex. Introduces a single-strand break via transesterification at a target site in duplex DNA. The scissile phosphodiester is attacked by the catalytic tyrosine of the enzyme, resulting in the formation of a DNA-(5'-phosphotyrosyl)-enzyme intermediate and the expulsion of a 3'-OH DNA strand. The free DNA strand then undergoes passage around the unbroken strand, thus removing DNA supercoils. Finally, in the religation step, the DNA 3'-OH attacks the covalent intermediate to expel the active-site tyrosine and restore the DNA phosphodiester backbone. The polypeptide is DNA topoisomerase 1 (Methanocaldococcus jannaschii (strain ATCC 43067 / DSM 2661 / JAL-1 / JCM 10045 / NBRC 100440) (Methanococcus jannaschii)).